A 58-amino-acid polypeptide reads, in one-letter code: Dortoxin (58 aa).

Residues 3 to 58 (VPGNYPLDKDGNTYTCLKLGENKDCQKVCKLHGVQYGYCYAFECWCKEYLDDKDSV) form the LCN-type CS-alpha/beta domain. Disulfide bonds link C18–C41, C27–C46, and C31–C48.

As to expression, expressed by the venom gland.

Its subcellular location is the secreted. Its function is as follows. Binds to sodium channels (Nav) and affects the channel activation process. In mice, causes hyperactivity that persists until death. The polypeptide is Dortoxin (Parabuthus transvaalicus (Transvaal thick-tailed scorpion)).